The chain runs to 150 residues: Large ribosomal subunit protein bL9 (150 aa).

It belongs to the bacterial ribosomal protein bL9 family.

Binds to the 23S rRNA. This Leptothrix cholodnii (strain ATCC 51168 / LMG 8142 / SP-6) (Leptothrix discophora (strain SP-6)) protein is Large ribosomal subunit protein bL9.